The following is a 263-amino-acid chain: Hydroxyethylthiazole kinase (263 aa).

Methionine 39 serves as a coordination point for substrate. ATP contacts are provided by lysine 115 and threonine 160. Glycine 187 contributes to the substrate binding site.

This sequence belongs to the Thz kinase family. The cofactor is Mg(2+).

It carries out the reaction 5-(2-hydroxyethyl)-4-methylthiazole + ATP = 4-methyl-5-(2-phosphooxyethyl)-thiazole + ADP + H(+). Its pathway is cofactor biosynthesis; thiamine diphosphate biosynthesis; 4-methyl-5-(2-phosphoethyl)-thiazole from 5-(2-hydroxyethyl)-4-methylthiazole: step 1/1. Catalyzes the phosphorylation of the hydroxyl group of 4-methyl-5-beta-hydroxyethylthiazole (THZ). The protein is Hydroxyethylthiazole kinase of Staphylococcus haemolyticus (strain JCSC1435).